The following is a 506-amino-acid chain: Gallate 1-beta-glucosyltransferase 84A23 (506 aa).

His-20 functions as the Proton acceptor in the catalytic mechanism. An anthocyanidin is bound at residue His-20. Residues Gln-345, His-360, Trp-363, Asn-364, Ser-365, and Glu-368 each coordinate UDP-alpha-D-glucose. Gly-383 serves as a coordination point for an anthocyanidin. Residues Asp-384 and Gln-385 each coordinate UDP-alpha-D-glucose.

Belongs to the UDP-glycosyltransferase family. In terms of tissue distribution, expressed in roots of the seedlings.

It is found in the cytoplasm. It carries out the reaction 3,4,5-trihydroxybenzoate + UDP-alpha-D-glucose = 1-O-galloyl-beta-D-glucose + UDP. The enzyme catalyses 3,4-dihydroxybenzoate + UDP-alpha-D-glucose = 1-O-(3,4-dihydroxy-benzoyl)-beta-D-glucose + UDP. The catalysed reaction is 4-hydroxybenzoate + UDP-alpha-D-glucose = 4-(beta-D-glucosyloxy)benzoate + UDP + H(+). It catalyses the reaction (E)-cinnamate + UDP-alpha-D-glucose = 1-O-(trans-cinnamoyl)-beta-D-glucose + UDP. It carries out the reaction (E)-sinapate + UDP-alpha-D-glucose = 1-O-(trans-sinapoyl)-beta-D-glucose + UDP. The enzyme catalyses (E)-4-coumarate + UDP-alpha-D-glucose = 1-O-(trans-4-coumaroyl)-beta-D-glucose + UDP. The catalysed reaction is (E)-caffeate + UDP-alpha-D-glucose = 1-O-[(E)-caffeoyl]-beta-D-glucose + UDP. It catalyses the reaction (E)-ferulate + UDP-alpha-D-glucose = 1-O-[(E)-feruloyl]-beta-D-glucose + UDP. It carries out the reaction genistein + UDP-alpha-D-glucose = genistein 7-O-beta-D-glucoside + UDP + H(+). The enzyme catalyses apigenin + UDP-alpha-D-glucose = apigenin 7-O-beta-D-glucoside + UDP + H(+). The catalysed reaction is luteolin + UDP-alpha-D-glucose = luteolin 7-O-beta-D-glucoside + UDP + H(+). Glucosyltransferase that catalyzes the formation of 1-O-beta-D-glucose esters with hydroxybenzoic acids and cinnamic acid including its derivatives as preferred glucosyl acceptors. Has significant activity with gallic acid (3,4,5-trihydroxybenzoic acid), 3,4-dihydroxybenzoic acid, 4-hydroxybenzoic acid, cinnamic acid, sinapic acid, coumaric acid, caffeic acid and ferulic acid in vitro. Gallic acid is the predicted native substrate of the enzyme, which thus catalyzes the formation of 1-O-galloyl-beta-D-glucose, the first committed step of hydrolyzable tannins (HTs) biosynthesis, with punicalagin isomers being the major HTs of pomegranate. Catalyzes the formation of flavonoid glucosides with genistein, apigenin and luteolin in vitro. Has low activity with benzoic acid, 2-hydroxybenzoic acid, 3-hydroxybenzoic acid, 2,4-dihydroxybenzoic acid, naringenin and quercetin. No activity with catechol, resveratrol, chlorogenic acid, catechin and epicatechin (building blocks of proanthocyanidins) or cyanidin, delphinidin and pelargonidin (the three anthocyanidins). This Punica granatum (Pomegranate) protein is Gallate 1-beta-glucosyltransferase 84A23.